A 155-amino-acid polypeptide reads, in one-letter code: Protein SprT-like (155 aa).

In terms of domain architecture, SprT-like spans 7–145 (QRHMEEVSLQ…GSCGGKLIQT (139 aa)). H67 contacts Zn(2+). Residue E68 is part of the active site. A Zn(2+)-binding site is contributed by H71.

This sequence belongs to the SprT family. It depends on Zn(2+) as a cofactor.

Its subcellular location is the cytoplasm. The polypeptide is Protein SprT-like (Listeria monocytogenes serotype 4b (strain CLIP80459)).